The sequence spans 258 residues: Imidazole glycerol phosphate synthase subunit HisF (258 aa).

Catalysis depends on residues D11 and D130.

It belongs to the HisA/HisF family. Heterodimer of HisH and HisF.

It is found in the cytoplasm. The enzyme catalyses 5-[(5-phospho-1-deoxy-D-ribulos-1-ylimino)methylamino]-1-(5-phospho-beta-D-ribosyl)imidazole-4-carboxamide + L-glutamine = D-erythro-1-(imidazol-4-yl)glycerol 3-phosphate + 5-amino-1-(5-phospho-beta-D-ribosyl)imidazole-4-carboxamide + L-glutamate + H(+). It functions in the pathway amino-acid biosynthesis; L-histidine biosynthesis; L-histidine from 5-phospho-alpha-D-ribose 1-diphosphate: step 5/9. Its function is as follows. IGPS catalyzes the conversion of PRFAR and glutamine to IGP, AICAR and glutamate. The HisF subunit catalyzes the cyclization activity that produces IGP and AICAR from PRFAR using the ammonia provided by the HisH subunit. This Salmonella arizonae (strain ATCC BAA-731 / CDC346-86 / RSK2980) protein is Imidazole glycerol phosphate synthase subunit HisF.